We begin with the raw amino-acid sequence, 508 residues long: Proline--tRNA ligase 2 (508 aa).

This sequence belongs to the class-II aminoacyl-tRNA synthetase family. ProS type 3 subfamily. Homodimer.

The protein resides in the cytoplasm. It catalyses the reaction tRNA(Pro) + L-proline + ATP = L-prolyl-tRNA(Pro) + AMP + diphosphate. In terms of biological role, catalyzes the attachment of proline to tRNA(Pro) in a two-step reaction: proline is first activated by ATP to form Pro-AMP and then transferred to the acceptor end of tRNA(Pro). This is Proline--tRNA ligase 2 from Bacillus anthracis.